We begin with the raw amino-acid sequence, 386 residues long: DNA-directed RNA polymerase subunit Rpo1C (386 aa).

The protein belongs to the RNA polymerase beta' chain family. As to quaternary structure, part of the RNA polymerase complex.

The protein localises to the cytoplasm. The catalysed reaction is RNA(n) + a ribonucleoside 5'-triphosphate = RNA(n+1) + diphosphate. DNA-dependent RNA polymerase (RNAP) catalyzes the transcription of DNA into RNA using the four ribonucleoside triphosphates as substrates. Forms part of the jaw domain. This Methanococcus maripaludis (strain C7 / ATCC BAA-1331) protein is DNA-directed RNA polymerase subunit Rpo1C.